The sequence spans 505 residues: Lysine--tRNA ligase (505 aa).

Residues 1–11 (MSDQQLDQPSL) show a composition bias toward polar residues. The disordered stretch occupies residues 1–23 (MSDQQLDQPSLSHEERQHEENKL). Residues 12 to 23 (SHEERQHEENKL) are compositionally biased toward basic and acidic residues. Glu-415 and Glu-422 together coordinate Mg(2+).

This sequence belongs to the class-II aminoacyl-tRNA synthetase family. Homodimer. Requires Mg(2+) as cofactor.

It is found in the cytoplasm. The catalysed reaction is tRNA(Lys) + L-lysine + ATP = L-lysyl-tRNA(Lys) + AMP + diphosphate. The protein is Lysine--tRNA ligase of Ectopseudomonas mendocina (strain ymp) (Pseudomonas mendocina).